We begin with the raw amino-acid sequence, 283 residues long: Heavy metal-associated isoprenylated plant protein 3 (283 aa).

A compositionally biased stretch (basic and acidic residues) spans 1–22 (MGEKKNEGDNKKKGGDNKKKNE). Residues 1-26 (MGEKKNEGDNKKKGGDNKKKNETPSI) form a disordered region. 2 HMA domains span residues 25–88 (SITV…KKKV) and 132–195 (VTTA…KRAV). Cys-36 and Cys-39 together coordinate Zn(2+). Over residues 82 to 129 (EKTKKKVDLVSPQPKKEKEKENKNKNDEDKKKSEEKKKPDNNDKKPKE) the composition is skewed to basic and acidic residues. The tract at residues 82–131 (EKTKKKVDLVSPQPKKEKEKENKNKNDEDKKKSEEKKKPDNNDKKPKETP) is disordered. Zn(2+)-binding residues include Cys-143 and Cys-146. Over residues 198–230 (VPPKKEKDKENGNENGEKKKGGGGDGGGKEKTG) the composition is skewed to basic and acidic residues. Residues 198-238 (VPPKKEKDKENGNENGEKKKGGGGDGGGKEKTGNKGGGEGV) are disordered. Position 280 is a cysteine methyl ester (Cys-280). The S-farnesyl cysteine moiety is linked to residue Cys-280. Residues 281-283 (VVM) constitute a propeptide, removed in mature form.

It belongs to the HIPP family.

The protein resides in the nucleus. The protein localises to the nucleolus. Its subcellular location is the cytoplasm. Functionally, heavy-metal-binding protein. Binds high amounts of zinc. May act as an upstream regulator of the salicylate-dependent pathogen response. Involved in abiotic stress responses, and seed and flower development. The polypeptide is Heavy metal-associated isoprenylated plant protein 3 (Arabidopsis thaliana (Mouse-ear cress)).